Here is a 253-residue protein sequence, read N- to C-terminus: Triosephosphate isomerase (253 aa).

Position 9 to 11 (9 to 11 (NWK)) interacts with substrate. H95 acts as the Electrophile in catalysis. The active-site Proton acceptor is the E167. Substrate is bound by residues G173, S213, and 234-235 (GG). S213 carries the post-translational modification Phosphoserine.

Belongs to the triosephosphate isomerase family. In terms of assembly, homodimer.

It localises to the cytoplasm. The catalysed reaction is D-glyceraldehyde 3-phosphate = dihydroxyacetone phosphate. Its pathway is carbohydrate biosynthesis; gluconeogenesis. It participates in carbohydrate degradation; glycolysis; D-glyceraldehyde 3-phosphate from glycerone phosphate: step 1/1. Functionally, involved in the gluconeogenesis. Catalyzes stereospecifically the conversion of dihydroxyacetone phosphate (DHAP) to D-glyceraldehyde-3-phosphate (G3P). This chain is Triosephosphate isomerase, found in Bacillus velezensis (strain DSM 23117 / BGSC 10A6 / LMG 26770 / FZB42) (Bacillus amyloliquefaciens subsp. plantarum).